The following is a 657-amino-acid chain: tRNA 5-methylaminomethyl-2-thiouridine biosynthesis bifunctional protein MnmC (657 aa).

Residues 1-235 (MSDAHNAQLD…KREMLAGPFQ (235 aa)) form a tRNA (mnm(5)s(2)U34)-methyltransferase region. Positions 261–657 (IGAGLAGCAT…QLIRGTGSPT (397 aa)) are FAD-dependent cmnm(5)s(2)U34 oxidoreductase.

This sequence in the N-terminal section; belongs to the methyltransferase superfamily. tRNA (mnm(5)s(2)U34)-methyltransferase family. It in the C-terminal section; belongs to the DAO family. FAD serves as cofactor.

The protein resides in the cytoplasm. The catalysed reaction is 5-aminomethyl-2-thiouridine(34) in tRNA + S-adenosyl-L-methionine = 5-methylaminomethyl-2-thiouridine(34) in tRNA + S-adenosyl-L-homocysteine + H(+). Its function is as follows. Catalyzes the last two steps in the biosynthesis of 5-methylaminomethyl-2-thiouridine (mnm(5)s(2)U) at the wobble position (U34) in tRNA. Catalyzes the FAD-dependent demodification of cmnm(5)s(2)U34 to nm(5)s(2)U34, followed by the transfer of a methyl group from S-adenosyl-L-methionine to nm(5)s(2)U34, to form mnm(5)s(2)U34. The sequence is that of tRNA 5-methylaminomethyl-2-thiouridine biosynthesis bifunctional protein MnmC from Ectopseudomonas mendocina (strain ymp) (Pseudomonas mendocina).